The primary structure comprises 239 residues: Uridylate kinase (239 aa).

10–13 serves as a coordination point for ATP; sequence KFSG. The interval 18–23 is involved in allosteric activation by GTP; sequence GENGFG. Residue Gly52 participates in UMP binding. The ATP site is built by Gly53 and Arg57. UMP is bound by residues Asp73 and 134–141; that span reads TGNPYFTT. Positions 161, 167, and 170 each coordinate ATP.

It belongs to the UMP kinase family. In terms of assembly, homohexamer.

It is found in the cytoplasm. It catalyses the reaction UMP + ATP = UDP + ADP. It functions in the pathway pyrimidine metabolism; CTP biosynthesis via de novo pathway; UDP from UMP (UMPK route): step 1/1. With respect to regulation, allosterically activated by GTP. Inhibited by UTP. Its function is as follows. Catalyzes the reversible phosphorylation of UMP to UDP. This chain is Uridylate kinase, found in Campylobacter jejuni subsp. jejuni serotype O:2 (strain ATCC 700819 / NCTC 11168).